Consider the following 217-residue polypeptide: Aminopyrimidine aminohydrolase (217 aa).

Asp44 is a binding site for substrate. Residue Cys135 is the Nucleophile of the active site. The substrate site is built by Tyr139 and Tyr165. Glu207 (proton donor) is an active-site residue.

Belongs to the TenA family. In terms of assembly, homotetramer.

The enzyme catalyses 4-amino-5-aminomethyl-2-methylpyrimidine + H2O = 4-amino-5-hydroxymethyl-2-methylpyrimidine + NH4(+). Its pathway is cofactor biosynthesis; thiamine diphosphate biosynthesis. Catalyzes an amino-pyrimidine hydrolysis reaction at the C5' of the pyrimidine moiety of thiamine compounds to give a hydroxymethylpyrimidine (HMP). Displays low activity on 4-amino-5-aminomethyl-2-methylpyrimidine as substrate, indicating that the enzyme may act on a different HMP precursor that may derive from the human stomach food assumption or processing. Is probably involved in thiamine biosynthesis. Does not display thiaminase II activity, as it is unable to hydrolyze thiamine. This Helicobacter pylori (Campylobacter pylori) protein is Aminopyrimidine aminohydrolase.